Consider the following 237-residue polypeptide: Phosphoribosylaminoimidazole-succinocarboxamide synthase (237 aa).

It belongs to the SAICAR synthetase family.

The enzyme catalyses 5-amino-1-(5-phospho-D-ribosyl)imidazole-4-carboxylate + L-aspartate + ATP = (2S)-2-[5-amino-1-(5-phospho-beta-D-ribosyl)imidazole-4-carboxamido]succinate + ADP + phosphate + 2 H(+). The protein operates within purine metabolism; IMP biosynthesis via de novo pathway; 5-amino-1-(5-phospho-D-ribosyl)imidazole-4-carboxamide from 5-amino-1-(5-phospho-D-ribosyl)imidazole-4-carboxylate: step 1/2. This is Phosphoribosylaminoimidazole-succinocarboxamide synthase from Enterococcus faecalis (strain ATCC 700802 / V583).